The chain runs to 104 residues: U20-lycotoxin-Ls1d (104 aa).

Positions 1–30 are cleaved as a signal peptide; the sequence is MFSTSDQVSKMNSRILSALLILGIATCVIA. The WAP domain occupies 31–76; that stretch reads GGFCPKSRHPQCNLSYKINDCCAQSDCRVGSVCCVEGCGNVCRAES. 5 disulfides stabilise this stretch: cysteine 34/cysteine 64, cysteine 42/cysteine 68, cysteine 51/cysteine 63, cysteine 52/cysteine 90, and cysteine 57/cysteine 72.

This sequence belongs to the venom protein 11 family. 02 (wap-2) subfamily. In terms of processing, contains 5 disulfide bonds. As to expression, expressed by the venom gland.

Its subcellular location is the secreted. Has antibacterial activity. The polypeptide is U20-lycotoxin-Ls1d (Lycosa singoriensis (Wolf spider)).